We begin with the raw amino-acid sequence, 20 residues long: Cytochrome c oxidase subunit 5B heart, mitochondrial (20 aa).

The interval 1-20 (XXLKGIPTDEEQATGLEEYA) is disordered.

The protein belongs to the cytochrome c oxidase subunit 5B family. As to quaternary structure, component of the cytochrome c oxidase (complex IV, CIV), a multisubunit enzyme composed of 14 subunits. The complex is composed of a catalytic core of 3 subunits MT-CO1, MT-CO2 and MT-CO3, encoded in the mitochondrial DNA, and 11 supernumerary subunits COX4I, COX5A, COX5B, COX6A, COX6B, COX6C, COX7A, COX7B, COX7C, COX8 and NDUFA4, which are encoded in the nuclear genome. The complex exists as a monomer or a dimer and forms supercomplexes (SCs) in the inner mitochondrial membrane with NADH-ubiquinone oxidoreductase (complex I, CI) and ubiquinol-cytochrome c oxidoreductase (cytochrome b-c1 complex, complex III, CIII), resulting in different assemblies (supercomplex SCI(1)III(2)IV(1) and megacomplex MCI(2)III(2)IV(2)).

It localises to the mitochondrion inner membrane. The protein operates within energy metabolism; oxidative phosphorylation. Functionally, component of the cytochrome c oxidase, the last enzyme in the mitochondrial electron transport chain which drives oxidative phosphorylation. The respiratory chain contains 3 multisubunit complexes succinate dehydrogenase (complex II, CII), ubiquinol-cytochrome c oxidoreductase (cytochrome b-c1 complex, complex III, CIII) and cytochrome c oxidase (complex IV, CIV), that cooperate to transfer electrons derived from NADH and succinate to molecular oxygen, creating an electrochemical gradient over the inner membrane that drives transmembrane transport and the ATP synthase. Cytochrome c oxidase is the component of the respiratory chain that catalyzes the reduction of oxygen to water. Electrons originating from reduced cytochrome c in the intermembrane space (IMS) are transferred via the dinuclear copper A center (CU(A)) of subunit 2 and heme A of subunit 1 to the active site in subunit 1, a binuclear center (BNC) formed by heme A3 and copper B (CU(B)). The BNC reduces molecular oxygen to 2 water molecules using 4 electrons from cytochrome c in the IMS and 4 protons from the mitochondrial matrix. The polypeptide is Cytochrome c oxidase subunit 5B heart, mitochondrial (Oncorhynchus mykiss (Rainbow trout)).